The following is a 204-amino-acid chain: MHFLKQYLFYSPRRMKTQEIKNVTLEDVDFLKNLGVWVEIYHHLEKGLLQQCFNLVKKNMEALYRQSSFGWDDSEKLKEMEMEKLEYICIFEKTSKKLVGFLSFEDTVEAGLTCLYIYEIQLDEHIRGRNVGKWLLKNASILAYRRNLKYIFLTVFSANLNALNFYHHFDFVPHESSPQEKKFRSGKVIHPDYYILYTKSRKDW.

Residues 39–202 form the N-acetyltransferase domain; it reads EIYHHLEKGL…YYILYTKSRK (164 aa). Residues Tyr64, 107 to 109, and Tyr118 each bind substrate; that span reads TVE. Residues 120–122 and 128–133 each bind acetyl-CoA; these read IQL and GRNVGK. Residue Thr154 participates in substrate binding. Asn159 is a binding site for acetyl-CoA. Ser176 provides a ligand contact to substrate.

Belongs to the acetyltransferase family. NAA40 subfamily.

It localises to the cytoplasm. Its subcellular location is the nucleus. The catalysed reaction is N-terminal L-seryl-[histone H4] + acetyl-CoA = N-terminal N(alpha)-acetyl-L-seryl-[histone H4] + CoA + H(+). It carries out the reaction N-terminal L-seryl-[histone H2A] + acetyl-CoA = N-terminal N(alpha)-acetyl-L-seryl-[histone H2A] + CoA + H(+). In terms of biological role, N-alpha-acetyltransferase that specifically mediates the acetylation of the N-terminal residues of histones H4 and H2A. The protein is N-alpha-acetyltransferase 40 of Schizosaccharomyces pombe (strain 972 / ATCC 24843) (Fission yeast).